The chain runs to 342 residues: Polyprenyl transferase trt2 (342 aa).

The next 9 membrane-spanning stretches (helical) occupy residues 71 to 91, 95 to 115, 141 to 161, 163 to 183, 187 to 207, 216 to 236, 261 to 278, 282 to 304, and 319 to 339; these read VVGV…TVLL, IILS…NDLI, AALL…LLPS, CTVE…GKRF, PQLI…SLEV, TLSM…VYAC, LAYG…LGGV, LGLP…FLSV, and AKSS…LEYL.

This sequence belongs to the UbiA prenyltransferase family. Mg(2+) is required as a cofactor.

Its subcellular location is the membrane. It catalyses the reaction 3,5-dimethylorsellinate + (2E,6E)-farnesyl diphosphate = (3R)-3-farnesyl-6-hydroxy-2,3,5-trimethyl-4-oxocyclohexa-1,5-diene-1-carboxylate + diphosphate + H(+). Its pathway is secondary metabolite biosynthesis; terpenoid biosynthesis. In terms of biological role, polyprenyl transferase; part of the gene cluster that mediates the biosynthesis of terretonin, a fungal meroterpenoid that acts as a mycotoxin. The first step of the pathway is the synthesis of 3,5-dimethylorsellinic acid (DMOA) by the polyketide synthase trt4. DMOA is then prenylated into farnesyl-DMOA by the polyprenyl transferase trt2. Methylation by the methyltransferase trt5 then leads to farnesyl-DMOA methyl ester which is further subject to epoxidation by the FAD-dependent monooxygenase trt8 to yield epoxyfarnesyl-DMOA methyl ester. Cyclization of epoxyfarnesyl-DMOA methyl ester by the terpene cyclase trt1 leads to a tetracycle intermediate which is in turn converted to preterretonin. Dehydrogenase trt9 comes next to transform preterretonin to preterrenoid. The FAD-dependent monooxygenase trt3 is then required for the C-hydroxylation at C16 of preterrenoid to yield terrenoid. The cytochrome P450 trt6 catalyzes three successive oxidations to transform terrenoid into an unstable intermediate, which then undergoes the D-ring expansion and unusual rearrangement of the methoxy group to afford the core skeleton of terretonin. Trt14 catalyzes the D-ring expansion of terretonin involving intramolecular methoxy rearrangement as well as the hydrolysis of the expanded D-ring and the methyl ester moiety. Finally, the nonheme iron-dependent dioxygenase trt7 accomplishes the last two oxidation reactions steps to complete the biosynthesis of terretonin. Terretonin C is produced via spontaneous decarboxylation of the terretonin precursor. Another shunt product of the terretonin biosynthesis is dihydrofarnesyl-DMOA, derived from epoxyfarnesyl-DMOA through hydrolysis of the epoxide. This chain is Polyprenyl transferase trt2, found in Aspergillus terreus (strain NIH 2624 / FGSC A1156).